We begin with the raw amino-acid sequence, 444 residues long: Xylose isomerase (444 aa).

Catalysis depends on residues His-101 and Asp-104. Mg(2+) is bound by residues Glu-232, Glu-268, His-271, Asp-296, Asp-307, Asp-309, and Asp-339.

This sequence belongs to the xylose isomerase family. As to quaternary structure, homotetramer. Requires Mg(2+) as cofactor.

The protein resides in the cytoplasm. It catalyses the reaction alpha-D-xylose = alpha-D-xylulofuranose. The chain is Xylose isomerase from Thermotoga maritima (strain ATCC 43589 / DSM 3109 / JCM 10099 / NBRC 100826 / MSB8).